A 215-amino-acid polypeptide reads, in one-letter code: Ribonuclease T (215 aa).

Residues 20 to 194 form the Exonuclease domain; the sequence is VVIDVETAGF…YDTERTAVLF (175 aa). 4 residues coordinate Mg(2+): aspartate 23, glutamate 25, histidine 181, and aspartate 186. Residue histidine 181 is the Proton donor/acceptor of the active site.

This sequence belongs to the RNase T family. Homodimer. Mg(2+) is required as a cofactor.

Trims short 3' overhangs of a variety of RNA species, leaving a one or two nucleotide 3' overhang. Responsible for the end-turnover of tRNA: specifically removes the terminal AMP residue from uncharged tRNA (tRNA-C-C-A). Also appears to be involved in tRNA biosynthesis. This Salmonella choleraesuis (strain SC-B67) protein is Ribonuclease T.